The chain runs to 794 residues: Lon protease (794 aa).

The region spanning 13 to 204 (VPLYPLREII…KVYMHLTNEV (192 aa)) is the Lon N-terminal domain. 356 to 363 (GPPGVGKT) provides a ligand contact to ATP. One can recognise a Lon proteolytic domain in the interval 592–773 (KDRVGVATGL…REVFVQALNP (182 aa)). Residues Ser679 and Lys722 contribute to the active site. Positions 774-788 (TSPAPTAATSARTPA) are enriched in low complexity. Residues 774 to 794 (TSPAPTAATSARTPAGAPPPQ) are disordered.

The protein belongs to the peptidase S16 family. As to quaternary structure, homohexamer. Organized in a ring with a central cavity.

The protein resides in the cytoplasm. It carries out the reaction Hydrolysis of proteins in presence of ATP.. In terms of biological role, ATP-dependent serine protease that mediates the selective degradation of mutant and abnormal proteins as well as certain short-lived regulatory proteins. Required for cellular homeostasis and for survival from DNA damage and developmental changes induced by stress. Degrades polypeptides processively to yield small peptide fragments that are 5 to 10 amino acids long. Binds to DNA in a double-stranded, site-specific manner. In Citrifermentans bemidjiense (strain ATCC BAA-1014 / DSM 16622 / JCM 12645 / Bem) (Geobacter bemidjiensis), this protein is Lon protease.